A 214-amino-acid polypeptide reads, in one-letter code: Pyridoxine/pyridoxamine 5'-phosphate oxidase (214 aa).

Substrate contacts are provided by residues 9–12 (RKNY) and Lys67. Residues 62-67 (RIVLLK), 77-78 (YT), Lys83, Lys84, and Gln106 each bind FMN. 3 residues coordinate substrate: Tyr124, Arg128, and Ser132. Residues 141–142 (QS) and Trp186 each bind FMN. 192 to 194 (RLH) is a binding site for substrate. Arg196 is an FMN binding site.

It belongs to the pyridoxamine 5'-phosphate oxidase family. As to quaternary structure, homodimer. FMN serves as cofactor.

The enzyme catalyses pyridoxamine 5'-phosphate + O2 + H2O = pyridoxal 5'-phosphate + H2O2 + NH4(+). The catalysed reaction is pyridoxine 5'-phosphate + O2 = pyridoxal 5'-phosphate + H2O2. Its pathway is cofactor metabolism; pyridoxal 5'-phosphate salvage; pyridoxal 5'-phosphate from pyridoxamine 5'-phosphate: step 1/1. It functions in the pathway cofactor metabolism; pyridoxal 5'-phosphate salvage; pyridoxal 5'-phosphate from pyridoxine 5'-phosphate: step 1/1. Its function is as follows. Catalyzes the oxidation of either pyridoxine 5'-phosphate (PNP) or pyridoxamine 5'-phosphate (PMP) into pyridoxal 5'-phosphate (PLP). This Leptospira borgpetersenii serovar Hardjo-bovis (strain JB197) protein is Pyridoxine/pyridoxamine 5'-phosphate oxidase.